The chain runs to 248 residues: Small ribosomal subunit protein uS3 (248 aa).

Positions 38–106 constitute a KH type-2 domain; it reads IREFLSKGLD…QVALNILEVK (69 aa). The segment covering 214–230 has biased composition (basic and acidic residues); it reads SEINAPAERRGRGDRNA. Residues 214–248 form a disordered region; that stretch reads SEINAPAERRGRGDRNARPRRGGQRRQRAEQKQEG.

The protein belongs to the universal ribosomal protein uS3 family. As to quaternary structure, part of the 30S ribosomal subunit. Forms a tight complex with proteins S10 and S14.

In terms of biological role, binds the lower part of the 30S subunit head. Binds mRNA in the 70S ribosome, positioning it for translation. In Corynebacterium glutamicum (strain R), this protein is Small ribosomal subunit protein uS3.